Consider the following 130-residue polypeptide: Prefoldin subunit alpha (130 aa).

Belongs to the prefoldin subunit alpha family. In terms of assembly, heterohexamer of two alpha and four beta subunits.

The protein localises to the cytoplasm. Its function is as follows. Molecular chaperone capable of stabilizing a range of proteins. Seems to fulfill an ATP-independent, HSP70-like function in archaeal de novo protein folding. In Thermoplasma volcanium (strain ATCC 51530 / DSM 4299 / JCM 9571 / NBRC 15438 / GSS1), this protein is Prefoldin subunit alpha.